The sequence spans 672 residues: Tubulin--tyrosine ligase-like protein 12 (672 aa).

Residues 332–670 (KIKIFLQIFA…LDEIDPTKVT (339 aa)) enclose the TTL domain. Residues 480–483 (CEYI), K499, and D501 contribute to the ATP site.

The protein belongs to the tubulin--tyrosine ligase family.

Functionally, regulates microtubule dynamics in uterine muscle cells. The chain is Tubulin--tyrosine ligase-like protein 12 from Caenorhabditis briggsae.